A 343-amino-acid polypeptide reads, in one-letter code: MPGTIILAIETSCDETGVGITRLEADGTLTLLADEVASSVDEHVRFGGVVPEIASRAHLEALGPAMRRALTTAGIVRPDVVATTIGPGLAGALLVGVAAAKAYAAAWGVPFYAVNHLGGHLAADVYEHGPLPECVALLVSGGHTHLLHVRSLGEPMVELGATVDDAAGEAYDKVARLLGLGYPGGKVLDDLARSGDPDAIVFPRGMTGPSDDPCAFSFSGLKTAVACYVEAHPDFRPADVAAGFQEAVADVLTRKAVRAATGLGVSTLLIAGGVAANSRLRELATQRCSEAGLTLRIPRPRLCTDNGAMIAAFAAHLVAAKAAPSPLDVPSDPGLPVVKGQVG.

Residues H116 and H120 each contribute to the Fe cation site. Substrate contacts are provided by residues 138 to 142, D172, G185, D189, and N277; that span reads LVSGG. A Fe cation-binding site is contributed by D305.

It belongs to the KAE1 / TsaD family. Fe(2+) is required as a cofactor.

Its subcellular location is the cytoplasm. It carries out the reaction L-threonylcarbamoyladenylate + adenosine(37) in tRNA = N(6)-L-threonylcarbamoyladenosine(37) in tRNA + AMP + H(+). In terms of biological role, required for the formation of a threonylcarbamoyl group on adenosine at position 37 (t(6)A37) in tRNAs that read codons beginning with adenine. Is involved in the transfer of the threonylcarbamoyl moiety of threonylcarbamoyl-AMP (TC-AMP) to the N6 group of A37, together with TsaE and TsaB. TsaD likely plays a direct catalytic role in this reaction. This Mycobacterium ulcerans (strain Agy99) protein is tRNA N6-adenosine threonylcarbamoyltransferase.